The primary structure comprises 116 residues: MSRSSIGPELEVNSKPLKGPIICPIRTYYSKVPLELLFPTTDRRFYFLKSYVFCSANSVPLYLLLLTSALHFNSYILLFDFQLKSKLLAYKRRARCVAGLLKSMERYPESTVTAMI.

A helical membrane pass occupies residues 52-72; that stretch reads VFCSANSVPLYLLLLTSALHF.

Its subcellular location is the mitochondrion membrane. This is an uncharacterized protein from Arabidopsis thaliana (Mouse-ear cress).